The chain runs to 134 residues: ATP synthase epsilon chain (134 aa).

Belongs to the ATPase epsilon chain family. As to quaternary structure, F-type ATPases have 2 components, CF(1) - the catalytic core - and CF(0) - the membrane proton channel. CF(1) has five subunits: alpha(3), beta(3), gamma(1), delta(1), epsilon(1). CF(0) has three main subunits: a, b and c.

It localises to the cell membrane. Its function is as follows. Produces ATP from ADP in the presence of a proton gradient across the membrane. The polypeptide is ATP synthase epsilon chain (Listeria monocytogenes serotype 4b (strain F2365)).